The chain runs to 233 residues: Serine-rich 25 kDa antigen protein (233 aa).

Positions 35-219 (KNEASPEKLE…DNNNLDAASS (185 aa)) are disordered. Basic and acidic residues predominate over residues 38–53 (ASPEKLEEAEEKEKSS). Acidic residues predominate over residues 61–71 (SNEDNEDDEDE). A run of 10 repeats spans residues 82–93 (SSSDKPDNKPEA), 102–113 (SSSDKPDNKPEA), 114–125 (SSSDKPDNKPEA), 126–137 (SSSDKPDNKPEA), 138–149 (SSSDKPDNKPEA), 150–161 (SSSDKPDNKPEA), 162–169 (SSTNKPEA), 170–177 (SSTNKPEA), 178–185 (SSTNKPEA), and 186–193 (SSTNKPEA). Positions 82 to 161 (SSSDKPDNKP…SDKPDNKPEA (80 aa)) are 6 X 12 AA tandem repeats of S-S-S-D-K-P-D-N-K-P-E-A. Basic and acidic residues predominate over residues 83-159 (SSDKPDNKPE…SSSDKPDNKP (77 aa)). The segment covering 160–192 (EASSTNKPEASSTNKPEASSTNKPEASSTNKPE) has biased composition (polar residues). A 4 X 8 AA tandem repeats of S-S-T-N-K-P-E-A region spans residues 162 to 193 (SSTNKPEASSTNKPEASSTNKPEASSTNKPEA). Residues 193 to 219 (ASSTSNSNDKSGSSSDNDNNNLDAASS) show a composition bias toward low complexity.

In terms of processing, phosphorylated on serine residue(s). Post-translationally, O-glycosylated; glycans consist of single N-acetylglucosamine residues. O-acylated; acyl group is probably palmitate, not myristate.

Its subcellular location is the cell membrane. Its function is as follows. Plays a role in the adhesion to host cells. Involved in the adhesion to host apoptotic cells thereby facilitating their phagocytosis. This is Serine-rich 25 kDa antigen protein from Entamoeba histolytica (strain ATCC 30459 / HM-1:IMSS / ABRM).